The primary structure comprises 464 residues: 3-isopropylmalate dehydratase large subunit (464 aa).

[4Fe-4S] cluster-binding residues include Cys337, Cys397, and Cys400.

This sequence belongs to the aconitase/IPM isomerase family. LeuC type 1 subfamily. As to quaternary structure, heterodimer of LeuC and LeuD. [4Fe-4S] cluster is required as a cofactor.

It catalyses the reaction (2R,3S)-3-isopropylmalate = (2S)-2-isopropylmalate. It participates in amino-acid biosynthesis; L-leucine biosynthesis; L-leucine from 3-methyl-2-oxobutanoate: step 2/4. In terms of biological role, catalyzes the isomerization between 2-isopropylmalate and 3-isopropylmalate, via the formation of 2-isopropylmaleate. This chain is 3-isopropylmalate dehydratase large subunit, found in Bacillus cereus (strain ZK / E33L).